Here is a 332-residue protein sequence, read N- to C-terminus: Caffeoylshikimate esterase (332 aa).

Over residues 1-13 (MPSEAESSANSAP) the composition is skewed to low complexity. Positions 1-26 (MPSEAESSANSAPATPPPPPNFWGTM) are disordered. S147 functions as the Nucleophile in the catalytic mechanism. Residues D268 and H298 each act as charge relay system in the active site.

The protein belongs to the AB hydrolase superfamily. Monoacylglycerol lipase family. In terms of assembly, interacts with ACBP2. As to expression, expressed in vasculature of roots and leaves, stems, flowers and siliques.

Its subcellular location is the cell membrane. The enzyme catalyses 5-O-[(E)-caffeoyl]-shikimate + H2O = shikimate + (E)-caffeate + H(+). Its function is as follows. Esterase involved in the biosynthesis of lignin. Hydrolyzes caffeoylshikimate into caffeate and shikimate. Together with 4-coumarate--CoA ligase (4CL), acts on an alternative reaction for the formation of caffeoyl-CoA and bypasses the second reaction of shikimate O-hydroxycinnamoyltransferase (HST). Also accepts 4-coumaroylshikimate as substrate, but with lower activity. According to PubMed:20345607 and PubMed:22915575, possesses monoacylglycerol O-acyltransferase, monoacylglycerol lipase and lysophospholipase activities in vitro. With the association of ACBP2, may promote the degradation of lysophosphatidylcholine and detoxify the peroxidized membrane in response to cadmium-induced oxidative stress. However these results require additional confirmation in vivo. The polypeptide is Caffeoylshikimate esterase (CSE) (Arabidopsis thaliana (Mouse-ear cress)).